The primary structure comprises 325 residues: Eukaryotic translation initiation factor 3 subunit I (325 aa).

4 WD repeats span residues 8 to 47, 50 to 91, 144 to 183, and 186 to 225; these read GHER…RLGT, GHTG…ALLK, CNDS…VLVN, and EHSR…HQKT. Thr-219 is modified (phosphothreonine). Lys-264 is modified (N6-acetyllysine). A Glycyl lysine isopeptide (Lys-Gly) (interchain with G-Cter in ubiquitin) cross-link involves residue Lys-282. The stretch at 283 to 324 is one WD 5 repeat; sequence GHFGPINSVAFHPDGKSYSSGGEDGYVRIHYFDPQYFEFEFE. Tyr-308 bears the Phosphotyrosine mark.

The protein belongs to the eIF-3 subunit I family. Component of the eukaryotic translation initiation factor 3 (eIF-3) complex, which is composed of 13 subunits: EIF3A, EIF3B, EIF3C, EIF3D, EIF3E, EIF3F, EIF3G, EIF3H, EIF3I, EIF3J, EIF3K, EIF3L and EIF3M. The eIF-3 complex appears to include 3 stable modules: module A is composed of EIF3A, EIF3B, EIF3G and EIF3I; module B is composed of EIF3F, EIF3H, and EIF3M; and module C is composed of EIF3C, EIF3D, EIF3E, EIF3K and EIF3L. EIF3C of module C binds EIF3B of module A and EIF3H of module B, thereby linking the three modules. EIF3J is a labile subunit that binds to the eIF-3 complex via EIF3B. The eIF-3 complex may interact with RPS6KB1 under conditions of nutrient depletion. Mitogenic stimulation may lead to binding and activation of a complex composed of MTOR and RPTOR, leading to phosphorylation and release of RPS6KB1 and binding of EIF4B to eIF-3. Post-translationally, phosphorylated by TGF-beta type II receptor.

Its subcellular location is the cytoplasm. In terms of biological role, component of the eukaryotic translation initiation factor 3 (eIF-3) complex, which is required for several steps in the initiation of protein synthesis. The eIF-3 complex associates with the 40S ribosome and facilitates the recruitment of eIF-1, eIF-1A, eIF-2:GTP:methionyl-tRNAi and eIF-5 to form the 43S pre-initiation complex (43S PIC). The eIF-3 complex stimulates mRNA recruitment to the 43S PIC and scanning of the mRNA for AUG recognition. The eIF-3 complex is also required for disassembly and recycling of post-termination ribosomal complexes and subsequently prevents premature joining of the 40S and 60S ribosomal subunits prior to initiation. The eIF-3 complex specifically targets and initiates translation of a subset of mRNAs involved in cell proliferation, including cell cycling, differentiation and apoptosis, and uses different modes of RNA stem-loop binding to exert either translational activation or repression. The sequence is that of Eukaryotic translation initiation factor 3 subunit I (Eif3i) from Mus musculus (Mouse).